Reading from the N-terminus, the 123-residue chain is MEYEFLLDVTGLVTSRFSMDHEAIGQWLNEEVKGDLAVIDKIASALAEIKGSERQWQLVGHEYTLLMDDEEVMVRANQLEFETDSMEEGMSYYDKESLAFCGTKDFIDMLADYRDFILQKYDW.

Belongs to the UPF0231 family.

This Photorhabdus laumondii subsp. laumondii (strain DSM 15139 / CIP 105565 / TT01) (Photorhabdus luminescens subsp. laumondii) protein is UPF0231 protein plu3616.